The following is a 688-amino-acid chain: Glycine--tRNA ligase beta subunit (688 aa).

This sequence belongs to the class-II aminoacyl-tRNA synthetase family. In terms of assembly, tetramer of two alpha and two beta subunits.

The protein resides in the cytoplasm. It carries out the reaction tRNA(Gly) + glycine + ATP = glycyl-tRNA(Gly) + AMP + diphosphate. This chain is Glycine--tRNA ligase beta subunit, found in Syntrophotalea carbinolica (strain DSM 2380 / NBRC 103641 / GraBd1) (Pelobacter carbinolicus).